A 241-amino-acid chain; its full sequence is Lipoprotein-releasing system ATP-binding protein LolD 2 (241 aa).

One can recognise an ABC transporter domain in the interval L6–V241. G43–T50 serves as a coordination point for ATP.

It belongs to the ABC transporter superfamily. Lipoprotein translocase (TC 3.A.1.125) family. In terms of assembly, the complex is composed of two ATP-binding proteins (LolD) and two transmembrane proteins (LolC and LolE).

Its subcellular location is the cell inner membrane. Functionally, part of the ABC transporter complex LolCDE involved in the translocation of mature outer membrane-directed lipoproteins, from the inner membrane to the periplasmic chaperone, LolA. Responsible for the formation of the LolA-lipoprotein complex in an ATP-dependent manner. The polypeptide is Lipoprotein-releasing system ATP-binding protein LolD 2 (Chlorobium chlorochromatii (strain CaD3)).